We begin with the raw amino-acid sequence, 274 residues long: 2,3,4,5-tetrahydropyridine-2,6-dicarboxylate N-succinyltransferase (274 aa).

Residues arginine 106 and aspartate 143 each coordinate substrate.

The protein belongs to the transferase hexapeptide repeat family. As to quaternary structure, homotrimer.

It localises to the cytoplasm. The enzyme catalyses (S)-2,3,4,5-tetrahydrodipicolinate + succinyl-CoA + H2O = (S)-2-succinylamino-6-oxoheptanedioate + CoA. The protein operates within amino-acid biosynthesis; L-lysine biosynthesis via DAP pathway; LL-2,6-diaminopimelate from (S)-tetrahydrodipicolinate (succinylase route): step 1/3. The chain is 2,3,4,5-tetrahydropyridine-2,6-dicarboxylate N-succinyltransferase from Albidiferax ferrireducens (strain ATCC BAA-621 / DSM 15236 / T118) (Rhodoferax ferrireducens).